A 256-amino-acid chain; its full sequence is Triosephosphate isomerase (256 aa).

A substrate-binding site is contributed by 9–11 (NWK). H97 functions as the Electrophile in the catalytic mechanism. Residue E169 is the Proton acceptor of the active site. Residues G175, S214, and 235–236 (GG) contribute to the substrate site.

Belongs to the triosephosphate isomerase family. In terms of assembly, homodimer.

Its subcellular location is the cytoplasm. The catalysed reaction is D-glyceraldehyde 3-phosphate = dihydroxyacetone phosphate. It functions in the pathway carbohydrate biosynthesis; gluconeogenesis. The protein operates within carbohydrate degradation; glycolysis; D-glyceraldehyde 3-phosphate from glycerone phosphate: step 1/1. Involved in the gluconeogenesis. Catalyzes stereospecifically the conversion of dihydroxyacetone phosphate (DHAP) to D-glyceraldehyde-3-phosphate (G3P). This Moritella marina (Vibrio marinus) protein is Triosephosphate isomerase.